Reading from the N-terminus, the 438-residue chain is Exosome complex component RRP45B (438 aa).

Disordered regions lie at residues 293 to 322 (PTLA…RAAE) and 334 to 438 (STEE…KNKS). Composition is skewed to basic and acidic residues over residues 307 to 322 (VKEE…RAAE) and 334 to 347 (STEE…EEAA). The span at 380–394 (TKSSSTKKMNGSGNA) shows a compositional bias: polar residues. Basic and acidic residues predominate over residues 410 to 429 (LGKKDTKHKDGEMTLKDAVK).

This sequence belongs to the RNase PH family.

The protein resides in the cytoplasm. The protein localises to the nucleus. Functionally, probable 3'-&gt;5' exoribonuclease involved in the regulation of cuticular wax biosynthesis by controlling the expression of CER3. May act by degrading a specific mRNA species encoding a negative regulator of CER3 transcription. Can perform exosomal functions and complement the yeast rrp45 null mutant. The polypeptide is Exosome complex component RRP45B (Arabidopsis thaliana (Mouse-ear cress)).